The following is a 378-amino-acid chain: Glutamate 5-kinase (378 aa).

K14 lines the ATP pocket. Substrate contacts are provided by S54, D141, and N153. Residue S173–D174 participates in ATP binding. Positions A279–D356 constitute a PUA domain.

The protein belongs to the glutamate 5-kinase family.

Its subcellular location is the cytoplasm. The enzyme catalyses L-glutamate + ATP = L-glutamyl 5-phosphate + ADP. Its pathway is amino-acid biosynthesis; L-proline biosynthesis; L-glutamate 5-semialdehyde from L-glutamate: step 1/2. Its function is as follows. Catalyzes the transfer of a phosphate group to glutamate to form L-glutamate 5-phosphate. The polypeptide is Glutamate 5-kinase (Brucella canis (strain ATCC 23365 / NCTC 10854 / RM-666)).